Here is a 752-residue protein sequence, read N- to C-terminus: Phosphoribosylformylglycinamidine synthase subunit PurL (752 aa).

The active site involves H58. ATP-binding residues include Y61 and K103. E105 contributes to the Mg(2+) binding site. Substrate is bound by residues 106-109 (SHNH) and R128. The active-site Proton acceptor is the H107. D129 contributes to the Mg(2+) binding site. Q253 contributes to the substrate binding site. D281 provides a ligand contact to Mg(2+). 325–327 (ESQ) provides a ligand contact to substrate. 2 residues coordinate ATP: D513 and G550. N551 contributes to the Mg(2+) binding site. S553 is a binding site for substrate.

It belongs to the FGAMS family. Monomer. Part of the FGAM synthase complex composed of 1 PurL, 1 PurQ and 2 PurS subunits.

The protein resides in the cytoplasm. The enzyme catalyses N(2)-formyl-N(1)-(5-phospho-beta-D-ribosyl)glycinamide + L-glutamine + ATP + H2O = 2-formamido-N(1)-(5-O-phospho-beta-D-ribosyl)acetamidine + L-glutamate + ADP + phosphate + H(+). It functions in the pathway purine metabolism; IMP biosynthesis via de novo pathway; 5-amino-1-(5-phospho-D-ribosyl)imidazole from N(2)-formyl-N(1)-(5-phospho-D-ribosyl)glycinamide: step 1/2. In terms of biological role, part of the phosphoribosylformylglycinamidine synthase complex involved in the purines biosynthetic pathway. Catalyzes the ATP-dependent conversion of formylglycinamide ribonucleotide (FGAR) and glutamine to yield formylglycinamidine ribonucleotide (FGAM) and glutamate. The FGAM synthase complex is composed of three subunits. PurQ produces an ammonia molecule by converting glutamine to glutamate. PurL transfers the ammonia molecule to FGAR to form FGAM in an ATP-dependent manner. PurS interacts with PurQ and PurL and is thought to assist in the transfer of the ammonia molecule from PurQ to PurL. The polypeptide is Phosphoribosylformylglycinamidine synthase subunit PurL (Streptomyces coelicolor (strain ATCC BAA-471 / A3(2) / M145)).